The chain runs to 1001 residues: Kinesin-like protein KIN-14P (1001 aa).

The region spanning 53-172 (AIRRYEAANW…CVLSLRSFSE (120 aa)) is the Calponin-homology (CH) domain. The segment covering 284-300 (NESVKHALDPNDDKLLS) has biased composition (basic and acidic residues). Residues 284-322 (NESVKHALDPNDDKLLSRADTPPEMESTCTCSTGNMDEE) form a disordered region. The 323-residue stretch at 426-748 (NIRVYCRVRP…LKFAERVATV (323 aa)) folds into the Kinesin motor domain. 509–516 (GQTGSGKT) lines the ATP pocket. Residues 756 to 784 (NKEGGEVKELKEQIACLKAALAKKDGETE) adopt a coiled-coil conformation. Disordered regions lie at residues 804 to 830 (PPAF…QKKR) and 890 to 1001 (EPQW…SAKK). The segment covering 972 to 984 (PSASTKNGKQLSL) has biased composition (polar residues).

This sequence belongs to the TRAFAC class myosin-kinesin ATPase superfamily. Kinesin family. KIN-14 subfamily.

In Oryza sativa subsp. japonica (Rice), this protein is Kinesin-like protein KIN-14P.